Reading from the N-terminus, the 447-residue chain is MLKKQSAGLVLWGAIIFVGWNALLLLFFWTRPAPGRLPSDSALGDDPASLTREVIHLAEDAEAELERQRGLLQQIKEHYSLWRQRWRVPTVAPPAWPRVPGTPSPAVIPILVIACDRSTVRRCLDKLLHYRPSAEHFPIIVSQDCGHEETAQVIASYGTAVTHIRQPDLSNIAVQPDHRKFQGYYKIARHYRWALGQIFNKFKFPAAVVVEDDLEVAPDFFEYFQATYPLLKADPSLWCVSAWNDNGKEQMVDSSKPELLYRTDFFPGLGWLLLADLWAELEPKWPKAFWDDWMRRPEQRKGRACIRPEISRTMTFGRKGVSHGQFFDQHLKFIKLNQQFVPFTQLDLSYLQREAYDRDFLAQVYGAPQLQVEKVRTNDRKELGEVRVQYTSRDSFKAFAKALGVMDDLKSGVPRAGYRGIVTFQFRGRRVHLAPPETWNGYDPSWN.

The Cytoplasmic portion of the chain corresponds to 1–6; sequence MLKKQS. Residues 7 to 29 form a helical; Signal-anchor for type II membrane protein membrane-spanning segment; the sequence is AGLVLWGAIIFVGWNALLLLFFW. Over 30–447 the chain is Lumenal; that stretch reads TRPAPGRLPS…TWNGYDPSWN (418 aa). Cysteine 115 and cysteine 145 are disulfide-bonded. Residues arginine 117, aspartate 144, histidine 190, and aspartate 212 each coordinate substrate. Aspartate 213 contributes to the Mn(2+) binding site. A disulfide bridge connects residues cysteine 239 and cysteine 305. Catalysis depends on aspartate 291, which acts as the Proton acceptor. Position 322 (serine 322) interacts with substrate.

This sequence belongs to the glycosyltransferase 13 family. As to quaternary structure, interacts with MGAT4D. Interacts with BRI3. Requires Mn(2+) as cofactor. Appears to be present in all tissues.

It localises to the golgi apparatus membrane. It is found in the cytoplasm. The protein resides in the perinuclear region. The enzyme catalyses N(4)-(alpha-D-Man-(1-&gt;3)-[alpha-D-Man-(1-&gt;3)-[alpha-D-Man-(1-&gt;6)]-alpha-D-Man-(1-&gt;6)]-beta-D-Man-(1-&gt;4)-beta-D-GlcNAc-(1-&gt;4)-beta-D-GlcNAc)-L-asparaginyl-[protein] (N-glucan mannose isomer 5A1,2) + UDP-N-acetyl-alpha-D-glucosamine = N(4)-{beta-D-GlcNAc-(1-&gt;2)-alpha-D-Man-(1-&gt;3)-[alpha-D-Man-(1-&gt;3)-[alpha-D-Man-(1-&gt;6)]-alpha-D-Man-(1-&gt;6)]-beta-D-Man-(1-&gt;4)-beta-D-GlcNAc-(1-&gt;4)-beta-D-GlcNAc}-L-asparaginyl-[protein] + UDP + H(+). It participates in protein modification; protein glycosylation. In terms of biological role, initiates complex N-linked carbohydrate formation. Essential for the conversion of high-mannose to hybrid and complex N-glycans. The chain is Alpha-1,3-mannosyl-glycoprotein 2-beta-N-acetylglucosaminyltransferase (Mgat1) from Rattus norvegicus (Rat).